The following is a 476-amino-acid chain: Bifunctional protein HldE (476 aa).

A ribokinase region spans residues 1–318; the sequence is MAQYSAEFKQ…ENAIHARPET (318 aa). 195–198 lines the ATP pocket; it reads NMSE. Asp-264 is a catalytic residue. Positions 344–476 are cytidylyltransferase; sequence MTNGCFDILH…VIEKIKLLKD (133 aa).

This sequence in the N-terminal section; belongs to the carbohydrate kinase PfkB family. It in the C-terminal section; belongs to the cytidylyltransferase family. Homodimer.

It carries out the reaction D-glycero-beta-D-manno-heptose 7-phosphate + ATP = D-glycero-beta-D-manno-heptose 1,7-bisphosphate + ADP + H(+). The catalysed reaction is D-glycero-beta-D-manno-heptose 1-phosphate + ATP + H(+) = ADP-D-glycero-beta-D-manno-heptose + diphosphate. It functions in the pathway nucleotide-sugar biosynthesis; ADP-L-glycero-beta-D-manno-heptose biosynthesis; ADP-L-glycero-beta-D-manno-heptose from D-glycero-beta-D-manno-heptose 7-phosphate: step 1/4. It participates in nucleotide-sugar biosynthesis; ADP-L-glycero-beta-D-manno-heptose biosynthesis; ADP-L-glycero-beta-D-manno-heptose from D-glycero-beta-D-manno-heptose 7-phosphate: step 3/4. Functionally, catalyzes the phosphorylation of D-glycero-D-manno-heptose 7-phosphate at the C-1 position to selectively form D-glycero-beta-D-manno-heptose-1,7-bisphosphate. In terms of biological role, catalyzes the ADP transfer from ATP to D-glycero-beta-D-manno-heptose 1-phosphate, yielding ADP-D-glycero-beta-D-manno-heptose. In Haemophilus influenzae (strain 86-028NP), this protein is Bifunctional protein HldE.